The primary structure comprises 334 residues: Cytoskeleton protein RodZ (334 aa).

Residues 1–111 (MNTEATHDQN…LGKRRKKRDG (111 aa)) lie on the Cytoplasmic side of the membrane. Positions 19–71 (LRNAREQLGLSQQAVAERLCLKVSTVRDIEEDKAPSDLASTFLRGYIRSYARL) constitute an HTH cro/C1-type domain. The H-T-H motif DNA-binding region spans 30 to 49 (QQAVAERLCLKVSTVRDIEE). The chain crosses the membrane as a helical; Signal-anchor for type II membrane protein span at residues 112–132 (WLMSFTWLVLFVVVGLTGAWW). Residues 133 to 334 (WQNHKAQQEE…TLNAEPTPAQ (202 aa)) lie on the Periplasmic side of the membrane. A disordered region spans residues 155–241 (NADKDSGQSV…PSALPTSQAG (87 aa)). Composition is skewed to low complexity over residues 170 to 211 (AATS…TVVA) and 219 to 241 (TAAT…SQAG).

It belongs to the RodZ family.

It is found in the cell inner membrane. Functionally, cytoskeletal protein that is involved in cell-shape control through regulation of the length of the long axis. In Salmonella agona (strain SL483), this protein is Cytoskeleton protein RodZ.